A 476-amino-acid chain; its full sequence is Bifunctional protein HldE (476 aa).

Positions 1–319 (MKISLPAFEK…EALSLSHGES (319 aa)) are ribokinase. 195–198 (NMSE) contacts ATP. Residue aspartate 264 is part of the active site. The interval 345 to 476 (MTNGCFDILH…AIIQNIMANQ (132 aa)) is cytidylyltransferase.

It in the N-terminal section; belongs to the carbohydrate kinase PfkB family. This sequence in the C-terminal section; belongs to the cytidylyltransferase family. As to quaternary structure, homodimer.

The catalysed reaction is D-glycero-beta-D-manno-heptose 7-phosphate + ATP = D-glycero-beta-D-manno-heptose 1,7-bisphosphate + ADP + H(+). It carries out the reaction D-glycero-beta-D-manno-heptose 1-phosphate + ATP + H(+) = ADP-D-glycero-beta-D-manno-heptose + diphosphate. The protein operates within nucleotide-sugar biosynthesis; ADP-L-glycero-beta-D-manno-heptose biosynthesis; ADP-L-glycero-beta-D-manno-heptose from D-glycero-beta-D-manno-heptose 7-phosphate: step 1/4. It functions in the pathway nucleotide-sugar biosynthesis; ADP-L-glycero-beta-D-manno-heptose biosynthesis; ADP-L-glycero-beta-D-manno-heptose from D-glycero-beta-D-manno-heptose 7-phosphate: step 3/4. Functionally, catalyzes the phosphorylation of D-glycero-D-manno-heptose 7-phosphate at the C-1 position to selectively form D-glycero-beta-D-manno-heptose-1,7-bisphosphate. Its function is as follows. Catalyzes the ADP transfer from ATP to D-glycero-beta-D-manno-heptose 1-phosphate, yielding ADP-D-glycero-beta-D-manno-heptose. The protein is Bifunctional protein HldE of Shewanella pealeana (strain ATCC 700345 / ANG-SQ1).